Consider the following 424-residue polypeptide: Serine--tRNA ligase (424 aa).

Position 230 to 232 (230 to 232 (TSE)) interacts with L-serine. ATP-binding positions include 261 to 263 (RKE) and V277. E284 lines the L-serine pocket. ATP is bound at residue 348-351 (ELTS). T382 contributes to the L-serine binding site.

Belongs to the class-II aminoacyl-tRNA synthetase family. Type-1 seryl-tRNA synthetase subfamily. As to quaternary structure, homodimer. The tRNA molecule binds across the dimer.

It is found in the cytoplasm. It carries out the reaction tRNA(Ser) + L-serine + ATP = L-seryl-tRNA(Ser) + AMP + diphosphate + H(+). The enzyme catalyses tRNA(Sec) + L-serine + ATP = L-seryl-tRNA(Sec) + AMP + diphosphate + H(+). Its pathway is aminoacyl-tRNA biosynthesis; selenocysteinyl-tRNA(Sec) biosynthesis; L-seryl-tRNA(Sec) from L-serine and tRNA(Sec): step 1/1. Catalyzes the attachment of serine to tRNA(Ser). Is also able to aminoacylate tRNA(Sec) with serine, to form the misacylated tRNA L-seryl-tRNA(Sec), which will be further converted into selenocysteinyl-tRNA(Sec). This chain is Serine--tRNA ligase, found in Nocardioides sp. (strain ATCC BAA-499 / JS614).